The chain runs to 476 residues: GTPase Der (476 aa).

2 EngA-type G domains span residues 3–167 (FTVA…GEER) and 205–380 (LRVA…KVWN). GTP is bound by residues 9-16 (GRPNVGKS), 56-60 (DTAGL), 119-122 (NKSE), 211-218 (GRPNAGKS), 258-262 (DTAGM), and 323-326 (NKWD). Residues 381–465 (RRISTARLNR…PIRVHFRASE (85 aa)) form the KH-like domain.

Belongs to the TRAFAC class TrmE-Era-EngA-EngB-Septin-like GTPase superfamily. EngA (Der) GTPase family. Associates with the 50S ribosomal subunit.

Its function is as follows. GTPase that plays an essential role in the late steps of ribosome biogenesis. In Rhizobium meliloti (strain 1021) (Ensifer meliloti), this protein is GTPase Der.